Consider the following 730-residue polypeptide: Exostosin-1a (730 aa).

The Cytoplasmic segment spans residues 1 to 6 (MQAKKR). A helical; Signal-anchor for type II membrane protein membrane pass occupies residues 7–27 (YLILFSAGVCLILLFYLQGPA). At 28–730 (SRRTPKRGDD…RKKYRDIERL (703 aa)) the chain is on the lumenal side. Residue Asn-314 is glycosylated (N-linked (GlcNAc...) asparagine). Positions 533, 549, 550, 551, 637, 638, and 685 each coordinate UDP-N-acetyl-alpha-D-glucosamine. Asp-551 contacts Mn(2+). Cys-636 and Cys-688 are joined by a disulfide. Residue Asp-638 is part of the active site.

This sequence belongs to the glycosyltransferase 47 family. It depends on Mn(2+) as a cofactor.

The protein resides in the endoplasmic reticulum membrane. It carries out the reaction 3-O-{[(1-&gt;4)-beta-D-GlcA-(1-&gt;4)-alpha-D-GlcNAc](n)-(1-&gt;4)-beta-D-GlcA-(1-&gt;3)-beta-D-Gal-(1-&gt;3)-beta-D-Gal-(1-&gt;4)-beta-D-Xyl}-L-seryl-[protein] + UDP-N-acetyl-alpha-D-glucosamine = 3-O-{alpha-D-GlcNAc-[(1-&gt;4)-beta-D-GlcA-(1-&gt;4)-alpha-D-GlcNAc](n)-(1-&gt;4)-beta-D-GlcA-(1-&gt;3)-beta-D-Gal-(1-&gt;3)-beta-D-Gal-(1-&gt;4)-beta-D-Xyl}-L-seryl-[protein] + UDP + H(+). The catalysed reaction is 3-O-{alpha-D-GlcNAc-[(1-&gt;4)-beta-D-GlcA-(1-&gt;4)-alpha-D-GlcNAc](n)-(1-&gt;4)-beta-D-GlcA-(1-&gt;3)-beta-D-Gal-(1-&gt;3)-beta-D-Gal-(1-&gt;4)-beta-D-Xyl}-L-seryl-[protein] + UDP-alpha-D-glucuronate = 3-O-{[(1-&gt;4)-beta-D-GlcA-(1-&gt;4)-alpha-D-GlcNAc](n+1)-(1-&gt;4)-beta-D-GlcA-(1-&gt;3)-beta-D-Gal-(1-&gt;3)-beta-D-Gal-(1-&gt;4)-beta-D-Xyl}-L-seryl-[protein] + UDP + H(+). The protein operates within protein modification; protein glycosylation. In terms of biological role, glycosyltransferase required for the biosynthesis of heparan-sulfate. This is Exostosin-1a (ext1a) from Danio rerio (Zebrafish).